The sequence spans 500 residues: Protein farnesyltransferase subunit beta (500 aa).

The tract at residues 117 to 140 (LQNDDNNGNNNNRENNQNGGGFGG) is disordered. Positions 119 to 133 (NDDNNGNNNNRENNQ) are enriched in low complexity. PFTB repeat units lie at residues 121-162 (DNNG…YVIG), 172-213 (REAM…SMLN), 220-261 (ERGV…SILN), 268-309 (MNSL…IIIQ), and 343-384 (QEYV…SLSQ). (2E,6E)-farnesyl diphosphate contacts are provided by residues 246-249 (HGGY) and 288-291 (RTNK). Asp294 and Cys296 together coordinate Zn(2+). 297–300 (YSYW) contacts (2E,6E)-farnesyl diphosphate. Position 372 (His372) interacts with Zn(2+). Residues 402–451 (FEQPSPPINKKSTNVFTISNNNNNNNNKNNNSDDNNNNSNNNNNNSENQL) are disordered. A compositionally biased stretch (low complexity) spans 420 to 449 (SNNNNNNNNKNNNSDDNNNNSNNNNNNSEN).

Belongs to the protein prenyltransferase subunit beta family. Heterodimer of fntA and fntB (farnesyltransferase). Heterodimer of an alpha and a beta subunit. Zn(2+) serves as cofactor.

It catalyses the reaction L-cysteinyl-[protein] + (2E,6E)-farnesyl diphosphate = S-(2E,6E)-farnesyl-L-cysteinyl-[protein] + diphosphate. In terms of biological role, catalyzes the transfer of a farnesyl moiety from farnesyl diphosphate to a cysteine at the fourth position from the C-terminus of several proteins. The beta subunit is responsible for peptide-binding. The polypeptide is Protein farnesyltransferase subunit beta (fntB) (Dictyostelium discoideum (Social amoeba)).